The sequence spans 99 residues: Acylphosphatase-1 (99 aa).

The 91-residue stretch at 9 to 99 folds into the Acylphosphatase-like domain; it reads SVDYEVFGKV…LEHSTFSICK (91 aa). Residues R24 and N42 contribute to the active site.

This sequence belongs to the acylphosphatase family.

It carries out the reaction an acyl phosphate + H2O = a carboxylate + phosphate + H(+). This Xenopus laevis (African clawed frog) protein is Acylphosphatase-1 (acyp1).